A 235-amino-acid polypeptide reads, in one-letter code: Regulator of G-protein signaling 18 (235 aa).

Serine 49 carries the phosphoserine modification. The 117-residue stretch at 86 to 202 folds into the RGS domain; sequence SFDKLLSHRD…LKSEIYLHLI (117 aa). Residues serine 216 and serine 218 each carry the phosphoserine modification.

The protein resides in the cytoplasm. In terms of biological role, inhibits signal transduction by increasing the GTPase activity of G protein alpha subunits thereby driving them into their inactive GDP-bound form. Binds to G(i) alpha-1, G(i) alpha-2, G(i) alpha-3 and G(q) alpha. This Rattus norvegicus (Rat) protein is Regulator of G-protein signaling 18 (Rgs18).